Consider the following 265-residue polypeptide: Pyrroline-5-carboxylate reductase (265 aa).

It belongs to the pyrroline-5-carboxylate reductase family.

The protein localises to the cytoplasm. It carries out the reaction L-proline + NADP(+) = (S)-1-pyrroline-5-carboxylate + NADPH + 2 H(+). It catalyses the reaction L-proline + NAD(+) = (S)-1-pyrroline-5-carboxylate + NADH + 2 H(+). The protein operates within amino-acid biosynthesis; L-proline biosynthesis; L-proline from L-glutamate 5-semialdehyde: step 1/1. Functionally, catalyzes the reduction of 1-pyrroline-5-carboxylate (PCA) to L-proline. This chain is Pyrroline-5-carboxylate reductase, found in Aquifex aeolicus (strain VF5).